The primary structure comprises 952 residues: MLRRPAPALARAVRLLLAGLLYGGGVWAARVNKHKPWLEPTYHGIVTENDNTVLLDPPLIALDKDSPLRFAGEICGFKIHGQNVPFDAVVVDKSTGEGIIRSKEKLDCELQKDYTFTIQAYDCGKGPDGTGVKKSHKATVHIQVNDVNEYAPVFKEKSYKAAVVEGKQHGSILRVEAVDADCSPQFSQICSYEILTPDVPFTVDKDGYIKNTEKLNYGKEHQYKLTVTAYDCGKKRATEDVLVKISVKPTCSPGWQGWSSRIEYEPGTGALAVFPSIHLETCDEPVASVQATVELETSHIGKGCDRDTYSEKSLHRLCGAAAGTSELLPSPSSSFNWTVGLPTDNGHDSDQVFEFNGTQAVRIPDGVVTLDPKEPFTISVWMRHGPFGRKKETILCSSDKTDMNRHHYSLYVHGCRLIFLLRQDPSEEKKYRPAEFHWKLNQVCDEDWHHFVLNVEVPSVTLYVDGVSHEPFSVTEDYPLHPTKIETQLVVGACWQGGDLHMTQFFRGNLAGLTVRSGKLADKKVIDCLYTCKEGLDLQVPEDGNRGVQIQTSSSQAVLTLEGENVGELDKAMQHISYLNSRQFPTPGIRRLKITSTVKCFNEAACIEVPPVEGYVMVLQPEEPKISLSGVHHFARAASEFESPEGVSLFPELKIISTITREVEPEADGAEDPTVQESLVSEEIVHDLDTCEVTVEGEELNAEQESLEVDVARLQQKGIEVNHSDLGVVFTGVETMASYEEVLHLLRYRNWHTRSLLDRKFKLICSELNGRYLSNEFKVEVNVIHTANPVEHANHMAAQPQFVHPEHRSFVDLSGHNLASPHPFAVVPSTATVVIVVCVSFLVFMIILGVFRIRAAHQRTMRDQDTGKENEMDWDDSALTITVNPMETYEDQHSSEEEEEEEEEEESEDGEEEEDITSAESESSEEEEGGPGDGQNTTRQQQLEWDYSTLSY.

An N-terminal signal peptide occupies residues 1–28 (MLRRPAPALARAVRLLLAGLLYGGGVWA). At 29-830 (ARVNKHKPWL…PHPFAVVPST (802 aa)) the chain is on the extracellular side. 2 consecutive Cadherin domains span residues 38–154 (LEPT…APVF) and 155–255 (KEKS…SPGW). An N-linked (GlcNAc...) asparagine glycan is attached at Asn356. Residues 831-851 (ATVVIVVCVSFLVFMIILGVF) form a helical membrane-spanning segment. The Cytoplasmic segment spans residues 852–952 (RIRAAHQRTM…LEWDYSTLSY (101 aa)). Positions 886–952 (METYEDQHSS…LEWDYSTLSY (67 aa)) are disordered. The span at 896–930 (EEEEEEEEEEESEDGEEEEDITSAESESSEEEEGG) shows a compositional bias: acidic residues. The segment covering 934-952 (GQNTTRQQQLEWDYSTLSY) has biased composition (polar residues).

Belongs to the calsyntenin family. In terms of assembly, directly interacts with APBA2. Forms a tripartite complex with APBA2 and APP. Interacts with KLC1. As to quaternary structure, interacts with APBB1; this interaction stabilizes AlcICD metabolism. Interacts with PSEN1. In terms of processing, proteolytically processed under normal cellular conditions. A primary zeta-cleavage generates a large extracellular (soluble) N-terminal domain (sAlc) and a short C-terminal transmembrane fragment (CTF1). A secondary cleavage catalyzed by presenilin gamma-secretase within the transmembrane domain releases the beta-Alc-alpha chain in the extracellular milieu and produces an intracellular fragment (AlcICD). This processing is strongly suppressed in the tripartite complex formed with APBA2 and APP, which seems to prevent the association with PSEN1. Preferentially expressed in the retina and brain.

It localises to the postsynaptic cell membrane. It is found in the endoplasmic reticulum membrane. Its subcellular location is the golgi apparatus membrane. The protein localises to the cell projection. The protein resides in the neuron projection. It localises to the nucleus. Its function is as follows. Postsynaptic adhesion molecule that binds to presynaptic neurexins to mediate both excitatory and inhibitory synapse formation. Promotes synapse development by acting as a cell adhesion molecule at the postsynaptic membrane, which associates with neurexin-alpha at the presynaptic membrane. Also functions as a cargo in axonal anterograde transport by acting as a molecular adapter that promotes KLC1 association with vesicles. Complex formation with APBA2 and APP, stabilizes APP metabolism and enhances APBA2-mediated suppression of beta-APP40 secretion, due to the retardation of intracellular APP maturation. Functionally, as intracellular fragment AlcICD, suppresses APBB1-dependent transactivation stimulated by APP C-terminal intracellular fragment (AICD), most probably by competing with AICD for APBB1-binding. In terms of biological role, in complex with APBA2 and C99, a C-terminal APP fragment, abolishes C99 interaction with PSEN1 and thus APP C99 cleavage by gamma-secretase, most probably through stabilization of the direct interaction between APBA2 and APP. The protein is Calsyntenin-1 (Clstn1) of Rattus norvegicus (Rat).